The sequence spans 430 residues: Serine hydroxymethyltransferase (430 aa).

(6S)-5,6,7,8-tetrahydrofolate contacts are provided by residues Leu-123 and 127–129 (GHL). N6-(pyridoxal phosphate)lysine is present on Lys-232. A (6S)-5,6,7,8-tetrahydrofolate-binding site is contributed by Glu-248.

The protein belongs to the SHMT family. Homodimer. Requires pyridoxal 5'-phosphate as cofactor.

The protein resides in the cytoplasm. It carries out the reaction (6R)-5,10-methylene-5,6,7,8-tetrahydrofolate + glycine + H2O = (6S)-5,6,7,8-tetrahydrofolate + L-serine. It participates in one-carbon metabolism; tetrahydrofolate interconversion. It functions in the pathway amino-acid biosynthesis; glycine biosynthesis; glycine from L-serine: step 1/1. Functionally, catalyzes the reversible interconversion of serine and glycine with tetrahydrofolate (THF) serving as the one-carbon carrier. This reaction serves as the major source of one-carbon groups required for the biosynthesis of purines, thymidylate, methionine, and other important biomolecules. Also exhibits THF-independent aldolase activity toward beta-hydroxyamino acids, producing glycine and aldehydes, via a retro-aldol mechanism. In Anaplasma marginale (strain St. Maries), this protein is Serine hydroxymethyltransferase.